The sequence spans 208 residues: FMRFamide-like neuropeptide 18 (208 aa).

A signal peptide spans 1-21 (MQRWSGVLLISLCCLLRGALA). Residues 22–83 (YTEPIYEIVE…VWEKRESSVQ (62 aa)) constitute a propeptide that is removed on maturation. F93 is subject to Phenylalanine amide. Positions 97-101 (AYFDE) are excised as a propeptide. Residue F111 is modified to Phenylalanine amide. Positions 115-119 (SYFDE) are excised as a propeptide. F129 carries the phenylalanine amide modification. The propeptide occupies 133–137 (DVPMD). Residue F147 is modified to Phenylalanine amide. Positions 151–158 (DYMADSFD) are excised as a propeptide. 2 positions are modified to phenylalanine amide: F169 and F180. Residues 184-195 (SDLEEHYAGVLL) constitute a propeptide that is removed on maturation. At F205 the chain carries Phenylalanine amide.

It belongs to the FARP (FMRFamide related peptide) family. Post-translationally, may be processed by convertase egl-3. In terms of tissue distribution, expressed in head neurons and weakly in ventral nerve cord. Expressed in the interneurons AVA, AIY and RIG, the motor neuron RIM and the pharyngeal neurons M2 and M3. EMPGVLRF-amide: Expressed in cholinergic pharyngeal motoneurons M2 and M3.

Its subcellular location is the secreted. FMRFamide-like neuropeptides. Ligand to G-protein coupled receptor npr-1. Involved in modulating locomotion quiescence during the sleep-like state called lethargus which occurs during molting between larval and adult stages, acting via npr-1. Together with flp-1, plays a homeostatic role by acting on the GABAergic neural transmission at neuromuscular junctions to prevent overexcitation of the locomotor circuit. Plays a role in the navigational capacity of sperm and the targeting of sperm derived from males to the fertilization site in the uterus of hermaphrodites. Its function is as follows. SVPGVLRF-amide: Excites muscle tension. Functionally, activates the G-protein coupled receptor npr-1 more effectively than other flp-18 peptides. Inhibits the activity of dissected pharyngeal myogenic muscle system. The polypeptide is FMRFamide-like neuropeptide 18 (Caenorhabditis elegans).